Here is a 187-residue protein sequence, read N- to C-terminus: Probable chorismate pyruvate-lyase (187 aa).

Arg-81, Leu-119, and Glu-178 together coordinate substrate.

The protein belongs to the UbiC family.

The protein resides in the cytoplasm. The enzyme catalyses chorismate = 4-hydroxybenzoate + pyruvate. The protein operates within cofactor biosynthesis; ubiquinone biosynthesis. In terms of biological role, removes the pyruvyl group from chorismate, with concomitant aromatization of the ring, to provide 4-hydroxybenzoate (4HB) for the ubiquinone pathway. This Thiobacillus denitrificans (strain ATCC 25259 / T1) protein is Probable chorismate pyruvate-lyase.